The following is a 402-amino-acid chain: Probable glutamate 5-kinase (402 aa).

The substrate site is built by S58, D145, and N157. Residues 177-178 and 218-224 each bind ATP; these read TD and TGGMKTK. One can recognise a PUA domain in the interval 295–373; that stretch reads HGSLEIDRGA…KEIASILGYN (79 aa).

This sequence belongs to the glutamate 5-kinase family.

It localises to the cytoplasm. The catalysed reaction is L-glutamate + ATP = L-glutamyl 5-phosphate + ADP. It participates in amino-acid biosynthesis; L-proline biosynthesis; L-glutamate 5-semialdehyde from L-glutamate: step 1/2. Functionally, catalyzes the transfer of a phosphate group to glutamate to form glutamate 5-phosphate which rapidly cyclizes to 5-oxoproline. The polypeptide is Probable glutamate 5-kinase (Schizosaccharomyces pombe (strain 972 / ATCC 24843) (Fission yeast)).